The primary structure comprises 248 residues: N-acylneuraminate-9-phosphatase (248 aa).

Position 12 (aspartate 12) interacts with Mg(2+). Phosphate-binding residues include leucine 13, aspartate 14, threonine 131, asparagine 132, and lysine 164. Residue aspartate 14 coordinates Mg(2+). Aspartate 189 is a binding site for Mg(2+).

It belongs to the HAD-like hydrolase superfamily. NANP family. It depends on Mg(2+) as a cofactor.

It catalyses the reaction N-acetylneuraminate 9-phosphate + H2O = N-acetylneuraminate + phosphate. The enzyme catalyses N-glycoloylneuraminate 9-phosphate + H2O = N-glycoloylneuraminate + phosphate. It functions in the pathway amino-sugar metabolism; N-acetylneuraminate biosynthesis. Its activity is regulated as follows. Inhibited by calcium. Inhibited by vanadate, sodium orthovanadate and phosphonate. Catalyzes the dephosphorylation of N-acylneuraminate 9-phosphate (Neu5Ac-9-P) to N-acetylneuraminic acid (Neu5Ac or sialic acid). Can also use N-glycoloylneuraminate 9-phosphate as substrate. The protein is N-acylneuraminate-9-phosphatase of Rattus norvegicus (Rat).